A 252-amino-acid chain; its full sequence is Triosephosphate isomerase (252 aa).

9–11 (NWK) contacts substrate. The Electrophile role is filled by His-100. Glu-171 serves as the catalytic Proton acceptor. Substrate is bound by residues Gly-177, Ser-216, and 237-238 (GG).

This sequence belongs to the triosephosphate isomerase family. As to quaternary structure, homodimer.

It is found in the cytoplasm. The catalysed reaction is D-glyceraldehyde 3-phosphate = dihydroxyacetone phosphate. It functions in the pathway carbohydrate biosynthesis; gluconeogenesis. It participates in carbohydrate degradation; glycolysis; D-glyceraldehyde 3-phosphate from glycerone phosphate: step 1/1. Involved in the gluconeogenesis. Catalyzes stereospecifically the conversion of dihydroxyacetone phosphate (DHAP) to D-glyceraldehyde-3-phosphate (G3P). The chain is Triosephosphate isomerase from Polynucleobacter necessarius subsp. necessarius (strain STIR1).